The primary structure comprises 245 residues: Uridylate kinase (245 aa).

20–23 lines the ATP pocket; it reads KLSG. Gly-60 lines the UMP pocket. 2 residues coordinate ATP: Gly-61 and Arg-65. UMP is bound by residues Asp-80 and 141 to 148; that span reads AGLPYFST. Positions 175 and 178 each coordinate ATP.

It belongs to the UMP kinase family. Homohexamer.

The protein resides in the cytoplasm. It carries out the reaction UMP + ATP = UDP + ADP. It participates in pyrimidine metabolism; CTP biosynthesis via de novo pathway; UDP from UMP (UMPK route): step 1/1. With respect to regulation, inhibited by UTP. In terms of biological role, catalyzes the reversible phosphorylation of UMP to UDP. This is Uridylate kinase from Paenarthrobacter aurescens (strain TC1).